Here is a 394-residue protein sequence, read N- to C-terminus: 1-deoxy-D-xylulose 5-phosphate reductoisomerase (394 aa).

Residues Thr-13, Gly-14, Thr-15, Ile-16, and Asn-125 each coordinate NADPH. A 1-deoxy-D-xylulose 5-phosphate-binding site is contributed by Lys-126. Glu-127 is a binding site for NADPH. Asp-151 is a binding site for Mn(2+). 1-deoxy-D-xylulose 5-phosphate contacts are provided by Ser-152, Glu-153, Ser-182, and His-205. Glu-153 lines the Mn(2+) pocket. Gly-211 provides a ligand contact to NADPH. Positions 218, 223, 224, and 227 each coordinate 1-deoxy-D-xylulose 5-phosphate. Glu-227 contacts Mn(2+).

This sequence belongs to the DXR family. Requires Mg(2+) as cofactor. Mn(2+) is required as a cofactor.

The catalysed reaction is 2-C-methyl-D-erythritol 4-phosphate + NADP(+) = 1-deoxy-D-xylulose 5-phosphate + NADPH + H(+). It functions in the pathway isoprenoid biosynthesis; isopentenyl diphosphate biosynthesis via DXP pathway; isopentenyl diphosphate from 1-deoxy-D-xylulose 5-phosphate: step 1/6. In terms of biological role, catalyzes the NADPH-dependent rearrangement and reduction of 1-deoxy-D-xylulose-5-phosphate (DXP) to 2-C-methyl-D-erythritol 4-phosphate (MEP). This is 1-deoxy-D-xylulose 5-phosphate reductoisomerase from Methylobacillus flagellatus (strain ATCC 51484 / DSM 6875 / VKM B-1610 / KT).